Consider the following 106-residue polypeptide: Transcription and mRNA export factor SUS1 (106 aa).

The protein belongs to the ENY2 family. Component of the nuclear pore complex (NPC)-associated TREX-2 complex (transcription and export complex 2), composed of at least SUS1, SAC3, THP1, SEM1, and CDC31. TREX-2 contains 2 SUS1 chains. The TREX-2 complex interacts with the nucleoporin NUP1. Component of the 1.8 MDa SAGA transcription coactivator-HAT complex. SAGA is built of 5 distinct domains with specialized functions. Within the SAGA complex, SUS1, SGF11, SGF73 and UBP8 form an additional subcomplex of SAGA called the DUB module (deubiquitination module). Interacts directly with THP1, SAC3, SGF11, and with the RNA polymerase II.

The protein localises to the nucleus. The protein resides in the nucleoplasm. It is found in the cytoplasm. Its subcellular location is the P-body. Functionally, involved in mRNA export coupled transcription activation by association with both the TREX-2 and the SAGA complexes. At the promoters, SAGA is required for recruitment of the basal transcription machinery. It influences RNA polymerase II transcriptional activity through different activities such as TBP interaction and promoter selectivity, interaction with transcription activators, and chromatin modification through histone acetylation and deubiquitination. Within the SAGA complex, participates in a subcomplex required for deubiquitination of H2B and for the maintenance of steady-state H3 methylation levels. The TREX-2 complex functions in docking export-competent ribonucleoprotein particles (mRNPs) to the nuclear entrance of the nuclear pore complex (nuclear basket). TREX-2 participates in mRNA export and accurate chromatin positioning in the nucleus by tethering genes to the nuclear periphery. May also be involved in cytoplasmic mRNA decay by interaction with components of P-bodies. The protein is Transcription and mRNA export factor SUS1 of Mycosarcoma maydis (Corn smut fungus).